The following is a 122-amino-acid chain: Small ribosomal subunit protein uS13 (122 aa).

Positions 97-122 are disordered; it reads PVRGQRTHTNARTRKGPARAIAGKKK.

Belongs to the universal ribosomal protein uS13 family. As to quaternary structure, part of the 30S ribosomal subunit. Forms a loose heterodimer with protein S19. Forms two bridges to the 50S subunit in the 70S ribosome.

In terms of biological role, located at the top of the head of the 30S subunit, it contacts several helices of the 16S rRNA. In the 70S ribosome it contacts the 23S rRNA (bridge B1a) and protein L5 of the 50S subunit (bridge B1b), connecting the 2 subunits; these bridges are implicated in subunit movement. Contacts the tRNAs in the A and P-sites. This is Small ribosomal subunit protein uS13 from Bartonella bacilliformis (strain ATCC 35685 / KC583 / Herrer 020/F12,63).